The primary structure comprises 174 residues: Small ribosomal subunit protein uS5 (174 aa).

The S5 DRBM domain occupies 16–79 (FSELIVSVRR…NAAKKNMIRV (64 aa)).

It belongs to the universal ribosomal protein uS5 family. In terms of assembly, part of the 30S ribosomal subunit. Contacts proteins S4 and S8.

Its function is as follows. With S4 and S12 plays an important role in translational accuracy. Located at the back of the 30S subunit body where it stabilizes the conformation of the head with respect to the body. The protein is Small ribosomal subunit protein uS5 of Ehrlichia canis (strain Jake).